A 58-amino-acid polypeptide reads, in one-letter code: Potassium channel toxin alpha-KTx BmKcug1a (58 aa).

The N-terminal stretch at 1–21 is a signal peptide; sequence MKISFLLLLAIVICSIGWTEA. Q22 carries the post-translational modification Pyrrolidone carboxylic acid. 3 disulfide bridges follow: C28–C49, C34–C54, and C38–C56.

Belongs to the short scorpion toxin superfamily. Potassium channel inhibitor family. Alpha-KTx 01 subfamily. Expressed by the venom gland.

The protein localises to the secreted. Its function is as follows. Potent blocker of both large-conductance calcium-activated potassium channels (KCa1.1/KCNMA1) and voltage-gated potassium channels (Kv1.3/KCNA3 and ERG1/Kv11.1/KCNH2). The protein is Potassium channel toxin alpha-KTx BmKcug1a of Olivierus martensii (Manchurian scorpion).